The following is a 205-amino-acid chain: Large ribosomal subunit protein uL4 (205 aa).

Residues 45–97 are disordered; the sequence is RQGTSAVKNRSAVRGGGKKPWRQKGTGRARQGSIRAPQWRGGGTVFGPTPRSY. Positions 60 to 71 are enriched in basic residues; the sequence is GGKKPWRQKGTG.

This sequence belongs to the universal ribosomal protein uL4 family. Part of the 50S ribosomal subunit.

Its function is as follows. One of the primary rRNA binding proteins, this protein initially binds near the 5'-end of the 23S rRNA. It is important during the early stages of 50S assembly. It makes multiple contacts with different domains of the 23S rRNA in the assembled 50S subunit and ribosome. Functionally, forms part of the polypeptide exit tunnel. This chain is Large ribosomal subunit protein uL4, found in Lactobacillus gasseri (strain ATCC 33323 / DSM 20243 / BCRC 14619 / CIP 102991 / JCM 1131 / KCTC 3163 / NCIMB 11718 / NCTC 13722 / AM63).